Consider the following 164-residue polypeptide: Transforming protein STP (164 aa).

Residues 1–41 (MARGLGEGDPQENDESNGDPPHNTDERSDGDDGPTPYLPVT) form a disordered region. A zinc finger lies at 122–135 (HSEHEQEGDKCTDC). A helical transmembrane segment spans residues 136 to 161 (SVTILLLLVIIVLLLIIIGLMLVIMF).

The protein localises to the membrane. Stp is required for transformation, but it is not required for replication of the virus. The T-lymphocyte is the target cell for transformation by herpesvirus saimiri. This Saimiriine herpesvirus 2 (strain 11) (SaHV-2) protein is Transforming protein STP (1).